We begin with the raw amino-acid sequence, 278 residues long: Ribosomal RNA small subunit methyltransferase A (278 aa).

Residues asparagine 27, leucine 29, glycine 54, glutamate 75, aspartate 101, and asparagine 120 each contribute to the S-adenosyl-L-methionine site.

Belongs to the class I-like SAM-binding methyltransferase superfamily. rRNA adenine N(6)-methyltransferase family. RsmA subfamily.

Its subcellular location is the cytoplasm. It catalyses the reaction adenosine(1518)/adenosine(1519) in 16S rRNA + 4 S-adenosyl-L-methionine = N(6)-dimethyladenosine(1518)/N(6)-dimethyladenosine(1519) in 16S rRNA + 4 S-adenosyl-L-homocysteine + 4 H(+). Its function is as follows. Specifically dimethylates two adjacent adenosines (A1518 and A1519) in the loop of a conserved hairpin near the 3'-end of 16S rRNA in the 30S particle. May play a critical role in biogenesis of 30S subunits. The chain is Ribosomal RNA small subunit methyltransferase A from Zymomonas mobilis subsp. mobilis (strain ATCC 31821 / ZM4 / CP4).